The sequence spans 289 residues: Polyamine aminopropyltransferase (289 aa).

The region spanning 5–245 (PGPITLIEPL…YAVNFILGSL (241 aa)) is the PABS domain. Residue Gln36 participates in S-methyl-5'-thioadenosine binding. Spermidine-binding residues include His67 and Glu91. S-methyl-5'-thioadenosine contacts are provided by residues Asp111 and 143–144 (DG). Residue Asp164 is the Proton acceptor of the active site.

Belongs to the spermidine/spermine synthase family. As to quaternary structure, homodimer or homotetramer.

It is found in the cytoplasm. It catalyses the reaction S-adenosyl 3-(methylsulfanyl)propylamine + putrescine = S-methyl-5'-thioadenosine + spermidine + H(+). It participates in amine and polyamine biosynthesis; spermidine biosynthesis; spermidine from putrescine: step 1/1. Its function is as follows. Catalyzes the irreversible transfer of a propylamine group from the amino donor S-adenosylmethioninamine (decarboxy-AdoMet) to putrescine (1,4-diaminobutane) to yield spermidine. In Pyrobaculum calidifontis (strain DSM 21063 / JCM 11548 / VA1), this protein is Polyamine aminopropyltransferase.